A 283-amino-acid chain; its full sequence is Bifunctional protein FolD (283 aa).

Residues 165 to 167, S190, and V231 each bind NADP(+); that span reads GRS.

It belongs to the tetrahydrofolate dehydrogenase/cyclohydrolase family. As to quaternary structure, homodimer. Interacts with BrxC.

The enzyme catalyses (6R)-5,10-methylene-5,6,7,8-tetrahydrofolate + NADP(+) = (6R)-5,10-methenyltetrahydrofolate + NADPH. It carries out the reaction (6R)-5,10-methenyltetrahydrofolate + H2O = (6R)-10-formyltetrahydrofolate + H(+). The protein operates within one-carbon metabolism; tetrahydrofolate interconversion. In terms of biological role, catalyzes the oxidation of 5,10-methylenetetrahydrofolate to 5,10-methenyltetrahydrofolate and then the hydrolysis of 5,10-methenyltetrahydrofolate to 10-formyltetrahydrofolate. The sequence is that of Bifunctional protein FolD from Bacillus subtilis (strain 168).